Here is a 762-residue protein sequence, read N- to C-terminus: Transcription factor kpeA (762 aa).

Residues 267 to 361 (FDHTSHGSQS…PLKPDQRKQA (95 aa)) form a disordered region. Over residues 294 to 312 (KKPSSPTRSTGSSSSTSPP) the composition is skewed to low complexity. The segment at residues 370-401 (CLRCKFLKKTCDKGEPCAGCQPSHARLWQVPC) is a DNA-binding region (zn(2)-C6 fungal-type).

The protein localises to the nucleus. In terms of biological role, transcription factor that regulates conidiation as well as kojic acid production, likely by negatively controlling kojR and kojA expression. The sequence is that of Transcription factor kpeA from Aspergillus oryzae (strain ATCC 42149 / RIB 40) (Yellow koji mold).